The following is a 145-amino-acid chain: D-aminoacyl-tRNA deacylase (145 aa).

Residues 137–138 (GP) carry the Gly-cisPro motif, important for rejection of L-amino acids motif.

This sequence belongs to the DTD family. Homodimer.

The protein resides in the cytoplasm. It catalyses the reaction glycyl-tRNA(Ala) + H2O = tRNA(Ala) + glycine + H(+). The catalysed reaction is a D-aminoacyl-tRNA + H2O = a tRNA + a D-alpha-amino acid + H(+). Functionally, an aminoacyl-tRNA editing enzyme that deacylates mischarged D-aminoacyl-tRNAs. Also deacylates mischarged glycyl-tRNA(Ala), protecting cells against glycine mischarging by AlaRS. Acts via tRNA-based rather than protein-based catalysis; rejects L-amino acids rather than detecting D-amino acids in the active site. By recycling D-aminoacyl-tRNA to D-amino acids and free tRNA molecules, this enzyme counteracts the toxicity associated with the formation of D-aminoacyl-tRNA entities in vivo and helps enforce protein L-homochirality. The chain is D-aminoacyl-tRNA deacylase from Pseudomonas entomophila (strain L48).